The sequence spans 141 residues: MPTINQLVRRGREKLKRKTKAPALDSCPQRRGVCVQVMTRTPKKPNSALRKVAKVRLTNGKEVIAYIPGEGHNLQEHSIVLVRGGRVKDLPGVRYHIIRGTLDASGAVGPSNTNKLNRNVSRSKYGVKRPKAGAKPASKAK.

D89 carries the 3-methylthioaspartic acid modification. A disordered region spans residues 104-141; it reads ASGAVGPSNTNKLNRNVSRSKYGVKRPKAGAKPASKAK. Residues 110-122 are compositionally biased toward polar residues; sequence PSNTNKLNRNVSR. Positions 125–141 are enriched in basic residues; that stretch reads YGVKRPKAGAKPASKAK.

This sequence belongs to the universal ribosomal protein uS12 family. As to quaternary structure, part of the 30S ribosomal subunit. Contacts proteins S8 and S17. May interact with IF1 in the 30S initiation complex.

With S4 and S5 plays an important role in translational accuracy. Its function is as follows. Interacts with and stabilizes bases of the 16S rRNA that are involved in tRNA selection in the A site and with the mRNA backbone. Located at the interface of the 30S and 50S subunits, it traverses the body of the 30S subunit contacting proteins on the other side and probably holding the rRNA structure together. The combined cluster of proteins S8, S12 and S17 appears to hold together the shoulder and platform of the 30S subunit. This Methylacidiphilum infernorum (isolate V4) (Methylokorus infernorum (strain V4)) protein is Small ribosomal subunit protein uS12.